Reading from the N-terminus, the 282-residue chain is Cyanocobalamin reductase / alkylcobalamin dealkylase (282 aa).

Substrate contacts are provided by residues D104, 115–118 (ILAQ), 129–131 (YYQ), C149, and I160. The interval 234 to 282 (LGLAQPSEKPSSPSPDLPFTTPAPKKPGNPSRARSWLSPRVSPPASPGP) is disordered. A phosphoserine mark is found at S245, S247, S275, and S279.

Belongs to the MMACHC family. Monomer in the absence of bound substrate. Homodimer; dimerization is triggered by binding to FMN or adenosylcobalamin. Interacts with LMBRD1 and ABCD4; the interaction ensures the transport of cobalamin from the lysosome to the cytoplasm. Forms a multiprotein complex with MMADHC, MTR and MTRR; the interaction with MTR could modulate MMACHC-dependent processing of cobalamin. Heterodimer with MMADHC; the interaction might play a role in the regulation of the balance between AdoCbl and MeCbl synthesis. The cofactor is FAD. FMN is required as a cofactor. Widely expressed. Expressed at higher level in fetal liver. Also expressed in spleen, lymph node, thymus and bone marrow. Weakly or not expressed in peripheral blood leukocytes.

The protein localises to the cytoplasm. Its subcellular location is the cytosol. It carries out the reaction 2 cob(II)alamin-[cyanocobalamin reductase] + 2 hydrogen cyanide + NADP(+) = 2 cyanocob(III)alamin + 2 apo-[cyanocobalamin reductase] + NADPH + H(+). The enzyme catalyses apo-[alkylcobalamin reductase] + an R-cob(III)alamin + glutathione = cob(I)alamin-[alkylcobalamin reductase] + an S-substituted glutathione + H(+). It catalyses the reaction apo-[alkylcobalamin reductase] + methylcob(III)alamin + glutathione = S-methyl glutathione + cob(I)alamin-[alkylcobalamin reductase] + H(+). The catalysed reaction is apo-[alkylcobalamin reductase] + adenosylcob(III)alamin + glutathione = S-adenosylglutathione + cob(I)alamin-[alkylcobalamin reductase] + H(+). Functionally, cobalamin (vitamin B12) cytosolic chaperone that catalyzes the reductive decyanation of cyanocob(III)alamin (cyanocobalamin, CNCbl) to yield cob(II)alamin and cyanide, using FAD or FMN as cofactors and NADPH as cosubstrate. Cyanocobalamin constitutes the inactive form of vitamin B12 introduced from the diet, and is converted into the active cofactors methylcobalamin (MeCbl) involved in methionine biosynthesis, and 5'-deoxyadenosylcobalamin (AdoCbl) involved in the TCA cycle. Forms a complex with the lysosomal transporter ABCD4 and its chaperone LMBRD1, to transport cobalamin across the lysosomal membrane into the cytosol. The processing of cobalamin in the cytosol occurs in a multiprotein complex composed of at least MMACHC, MMADHC, MTRR (methionine synthase reductase) and MTR (methionine synthase) which may contribute to shuttle safely and efficiently cobalamin towards MTR in order to produce methionine. Also acts as a glutathione transferase by catalyzing the dealkylation of the alkylcob(III)alamins MeCbl and AdoCbl, using the thiolate of glutathione for nucleophilic displacement to generate cob(I)alamin and the corresponding glutathione thioether. The conversion of incoming MeCbl or AdoCbl into a common intermediate cob(I)alamin is necessary to meet the cellular needs for both cofactors. Cysteine and homocysteine cannot substitute for glutathione in this reaction. The polypeptide is Cyanocobalamin reductase / alkylcobalamin dealkylase (Homo sapiens (Human)).